Here is a 421-residue protein sequence, read N- to C-terminus: Zinc metalloproteinase-disintegrin-like crotastatin (421 aa).

In terms of domain architecture, Peptidase M12B spans 10 to 206 (KYVKLFLVAD…NMPQCILKKP (197 aa)). Asparagine 29 is a glycosylation site (N-linked (GlcNAc...) asparagine). Disulfide bonds link cysteine 121–cysteine 201, cysteine 161–cysteine 185, and cysteine 163–cysteine 168. Zn(2+) is bound at residue histidine 146. Glutamate 147 is an active-site residue. 2 residues coordinate Zn(2+): histidine 150 and histidine 156. One can recognise a Disintegrin domain in the interval 214 to 299 (PAVCGNYFVE…TECTDRFQRN (86 aa)). Valine 216, asparagine 219, phenylalanine 221, glutamate 223, glutamate 226, and aspartate 229 together coordinate Ca(2+). 14 disulfides stabilise this stretch: cysteine 217-cysteine 246, cysteine 228-cysteine 241, cysteine 230-cysteine 236, cysteine 240-cysteine 263, cysteine 254-cysteine 260, cysteine 259-cysteine 285, cysteine 272-cysteine 292, cysteine 279-cysteine 310, cysteine 303-cysteine 315, cysteine 322-cysteine 372, cysteine 337-cysteine 383, cysteine 350-cysteine 360, cysteine 367-cysteine 409, and cysteine 403-cysteine 414. The D/ECD-tripeptide motif lies at 278-280 (ECD). The Ca(2+) site is built by aspartate 280, methionine 281, aspartate 283, aspartate 294, and arginine 295.

It belongs to the venom metalloproteinase (M12B) family. P-III subfamily. P-IIIc sub-subfamily. Homodimer; disulfide-linked. Zn(2+) serves as cofactor. As to expression, expressed by the venom gland.

The protein localises to the secreted. Snake venom zinc metalloprotease that induces apoptosis in vascular endothelial cells (VEC), without degrading the extracellular matrix (it cannot cleave collagen) or inhibiting adhesion of VEC. Has also fibrinogenolytic and hemorrhagic activities. The sequence is that of Zinc metalloproteinase-disintegrin-like crotastatin from Crotalus durissus terrificus (South American rattlesnake).